Here is a 361-residue protein sequence, read N- to C-terminus: Ribosomal RNA large subunit methyltransferase M (361 aa).

S-adenosyl-L-methionine contacts are provided by residues Ser187, 220 to 223, Asp239, Asp259, and Asp276; that span reads CPGG. Lys305 (proton acceptor) is an active-site residue.

Belongs to the class I-like SAM-binding methyltransferase superfamily. RNA methyltransferase RlmE family. RlmM subfamily. As to quaternary structure, monomer.

It localises to the cytoplasm. The enzyme catalyses cytidine(2498) in 23S rRNA + S-adenosyl-L-methionine = 2'-O-methylcytidine(2498) in 23S rRNA + S-adenosyl-L-homocysteine + H(+). Functionally, catalyzes the 2'-O-methylation at nucleotide C2498 in 23S rRNA. The chain is Ribosomal RNA large subunit methyltransferase M from Shewanella baltica (strain OS185).